The following is a 209-amino-acid chain: MGSRAICIQRVAPPCFEASQVKKIKTVGSFLVNTRSKRRRSTGVKCSSIADYIGGDLVKPDIGQWLQDVEEHKAIAIYAPHEGGYEGRYLNRLKMQGYYFLDISARGLGDPETTLLKNYPVCPAHLGKQPIARWYYPPEVDYRLAALPPSAKGLVVWVLEAKVLSKSELQFLALLPSLRPNVRVIAECGNWRKFVWKPLAEIANLAAQE.

A chloroplast-targeting transit peptide spans 1–45 (MGSRAICIQRVAPPCFEASQVKKIKTVGSFLVNTRSKRRRSTGVK).

The protein belongs to the NDH complex subunit N family. Part of the chloroplast NDH complex, composed of a mixture of chloroplast and nucleus encoded subunits. Component of the NDH subcomplex A, at least composed of ndhH, ndhI, ndhJ, ndhK, ndhL, ndhM, ndhN and ndhO.

It localises to the plastid. It is found in the chloroplast thylakoid membrane. It catalyses the reaction a plastoquinone + NADH + (n+1) H(+)(in) = a plastoquinol + NAD(+) + n H(+)(out). The catalysed reaction is a plastoquinone + NADPH + (n+1) H(+)(in) = a plastoquinol + NADP(+) + n H(+)(out). NDH shuttles electrons from NAD(P)H:plastoquinone, via FMN and iron-sulfur (Fe-S) centers, to quinones in the photosynthetic chain and possibly in a chloroplast respiratory chain. The immediate electron acceptor for the enzyme in this species is believed to be plastoquinone. Couples the redox reaction to proton translocation, and thus conserves the redox energy in a proton gradient. This chain is NAD(P)H-quinone oxidoreductase subunit N, chloroplastic, found in Arabidopsis thaliana (Mouse-ear cress).